We begin with the raw amino-acid sequence, 447 residues long: Phosphoglucosamine mutase (447 aa).

S108 acts as the Phosphoserine intermediate in catalysis. Mg(2+)-binding residues include S108, D247, D249, and D251. The residue at position 108 (S108) is a Phosphoserine.

This sequence belongs to the phosphohexose mutase family. Requires Mg(2+) as cofactor. In terms of processing, activated by phosphorylation.

The catalysed reaction is alpha-D-glucosamine 1-phosphate = D-glucosamine 6-phosphate. Its function is as follows. Catalyzes the conversion of glucosamine-6-phosphate to glucosamine-1-phosphate. The protein is Phosphoglucosamine mutase of Bordetella petrii (strain ATCC BAA-461 / DSM 12804 / CCUG 43448).